A 469-amino-acid chain; its full sequence is Glutamate--tRNA ligase (469 aa).

Residues 11–21 (PSPTGFIHLGN) carry the 'HIGH' region motif. The span at 116 to 131 (ASGEKPRYDGTWRPEP) shows a compositional bias: basic and acidic residues. The disordered stretch occupies residues 116-139 (ASGEKPRYDGTWRPEPGKVLPTPP). The 'KMSKS' region motif lies at 243–247 (KMSKR). Residue K246 coordinates ATP.

The protein belongs to the class-I aminoacyl-tRNA synthetase family. Glutamate--tRNA ligase type 1 subfamily. As to quaternary structure, monomer.

The protein resides in the cytoplasm. The catalysed reaction is tRNA(Glu) + L-glutamate + ATP = L-glutamyl-tRNA(Glu) + AMP + diphosphate. Its function is as follows. Catalyzes the attachment of glutamate to tRNA(Glu) in a two-step reaction: glutamate is first activated by ATP to form Glu-AMP and then transferred to the acceptor end of tRNA(Glu). The polypeptide is Glutamate--tRNA ligase (Paraburkholderia phymatum (strain DSM 17167 / CIP 108236 / LMG 21445 / STM815) (Burkholderia phymatum)).